Here is a 334-residue protein sequence, read N- to C-terminus: MSSRLHPDIERAYRVLETGEPVSLELASALGRLPESEVLDLVSLANKVKNLYAPGEGGGVHACSIMNAKSGVCGENCRFCAQSKHNSAEVDVYGLVDEAKVLDQARALHEQGVGHFGIVTSGYGYRKVTPEFERILGMIDLLHRELPDLKVCASLGMLGDEPAAELARHGIAHYNINIQVDPGRYGELIADTHSVDERIDTIRRLRAHGIAVCCGGIIGTGETMQERIGMIFALQKLDVTVIPLNVLVPIDGTPLEGAAPVSVPEIAKTFAICRLAHPSKIIKFAAGRETVMKDFQGLLMLAGANGFLTGGYLTTRGRDMEADRQLAGQIARFS.

A Radical SAM core domain is found at 55–285 (GEGGGVHACS…AHPSKIIKFA (231 aa)). [4Fe-4S] cluster is bound by residues C73, C77, and C80. Positions 152, 213, and 283 each coordinate [2Fe-2S] cluster.

The protein belongs to the radical SAM superfamily. Biotin synthase family. In terms of assembly, homodimer. [4Fe-4S] cluster is required as a cofactor. The cofactor is [2Fe-2S] cluster.

The catalysed reaction is (4R,5S)-dethiobiotin + (sulfur carrier)-SH + 2 reduced [2Fe-2S]-[ferredoxin] + 2 S-adenosyl-L-methionine = (sulfur carrier)-H + biotin + 2 5'-deoxyadenosine + 2 L-methionine + 2 oxidized [2Fe-2S]-[ferredoxin]. It functions in the pathway cofactor biosynthesis; biotin biosynthesis; biotin from 7,8-diaminononanoate: step 2/2. In terms of biological role, catalyzes the conversion of dethiobiotin (DTB) to biotin by the insertion of a sulfur atom into dethiobiotin via a radical-based mechanism. The sequence is that of Biotin synthase from Chlorobaculum parvum (strain DSM 263 / NCIMB 8327) (Chlorobium vibrioforme subsp. thiosulfatophilum).